The chain runs to 375 residues: CD2 homolog (375 aa).

Residues 1–16 (MIIILIFLIIPNIVLS) form the signal peptide. Over 17–207 (IDYWVSFNKT…YLDFFQVASY (191 aa)) the chain is Extracellular. N-linked (GlcNAc...) asparagine; by host glycans are attached at residues Asn24, Asn80, Asn105, Asn122, Asn134, Asn145, Asn168, Asn176, and Asn183. 2 cysteine pairs are disulfide-bonded: Cys123-Cys190 and Cys130-Cys173. A helical membrane pass occupies residues 208–228 (MFYMIIFIATGIIASIFISII). The Cytoplasmic segment spans residues 229 to 375 (TFLSLRKRKK…ISLIHVDRII (147 aa)). The segment at 242–278 (EIESPSPSESNEEEQCQHDDTTSIHEPSPREPLLPKP) is disordered. Over residues 256–270 (QCQHDDTTSIHEPSP) the composition is skewed to basic and acidic residues. Repeat copies occupy residues 305–310 (KLCPPP), 311–316 (KPCPPP), 317–322 (KPCPPP), 323–328 (KPCPPP), and 329–334 (KPCPSS). The interval 305-334 (KLCPPPKPCPPPKPCPPPKPCPPPKPCPSS) is 5 X 6 AA tandem repeats of K-[LP]-C-[PRS]-[PS]-[PS]. Residues 323 to 350 (KPCPPPKPCPSSESCSPPESYSLPKPLP) are disordered. Residues 332 to 346 (PSSESCSPPESYSLP) are compositionally biased toward low complexity.

Belongs to the asfivirus CD2 homolog protein family. As to quaternary structure, both glycosylated and nonglycosylated forms interact (via C-terminus) with the host AP-1 complex. In terms of processing, cleaved into two fragments of 63 kDa and 26 kDa containing respectively the glycosylated N-terminus and the nonglycosylated C-terminus. A full-length 89-kDa glycosylated form also exists.

It is found in the host membrane. The protein localises to the virion membrane. Its subcellular location is the host Golgi apparatus. In terms of biological role, may play an immunosuppressive role by inhibiting lymphocyte proliferation and subsequently facilitating viral replication and generalization of infection. Responsible for viral hemadsorption, which may help viral spread. Increases virus replication in the tick vector at the step of virus uptake or replication in the tick gut. May play a role in the host Golgi reorganization to yield viral factories. May play a role in host cell penetration. The polypeptide is CD2 homolog (Ornithodoros (relapsing fever ticks)).